A 158-amino-acid polypeptide reads, in one-letter code: N-alpha-acetyltransferase RimI (158 aa).

The N-acetyltransferase domain occupies 8 to 155 (VTIGALTRAD…DAYTMRRDSG (148 aa)).

Belongs to the acetyltransferase family. RimI subfamily. As to quaternary structure, monomer. Interacts with TsaD. Interacts with GroS/GroES.

It catalyses the reaction N-terminal L-methionyl-L-alanyl-[protein] + acetyl-CoA = N-terminal N(alpha)-acetyl-L-methionyl-L-alanyl-[protein] + CoA + H(+). The catalysed reaction is N-terminal L-methionyl-L-seryl-[protein] + acetyl-CoA = N-terminal N(alpha)-acetyl-L-methionyl-L-seryl-[protein] + CoA + H(+). It carries out the reaction N-terminal L-methionyl-L-valyl-[protein] + acetyl-CoA = N-terminal N(alpha)-acetyl-L-methionyl-L-valyl-[protein] + CoA + H(+). The enzyme catalyses N-terminal L-methionyl-L-threonyl-[protein] + acetyl-CoA = N-terminal N(alpha)-acetyl-L-methionyl-L-threonyl-[protein] + CoA + H(+). It catalyses the reaction N-terminal L-methionyl-L-lysyl-[protein] + acetyl-CoA = N-terminal N(alpha)-acetyl-L-methionyl-L-lysyl-[protein] + CoA + H(+). The catalysed reaction is N-terminal L-methionyl-L-leucyl-[protein] + acetyl-CoA = N-terminal N(alpha)-acetyl-L-methionyl-L-leucyl-[protein] + CoA + H(+). It carries out the reaction N-terminal L-methionyl-L-phenylalanyl-[protein] + acetyl-CoA = N-terminal N(alpha)-acetyl-L-methionyl-L-phenylalanyl-[protein] + CoA + H(+). The enzyme catalyses N-terminal L-methionyl-L-tyrosyl-[protein] + acetyl-CoA = N-terminal N(alpha)-acetyl-L-methionyl-L-tyrosyl-[protein] + CoA + H(+). It catalyses the reaction N-terminal glycyl-[protein] + acetyl-CoA = N-terminal N(alpha)-acetylglycyl-[protein] + CoA + H(+). The catalysed reaction is N-terminal L-alanyl-[protein] + acetyl-CoA = N-terminal N(alpha)-acetyl-L-alanyl-[protein] + CoA + H(+). It carries out the reaction N-terminal L-seryl-[protein] + acetyl-CoA = N-terminal N(alpha)-acetyl-L-seryl-[protein] + CoA + H(+). The enzyme catalyses N-terminal L-valyl-[protein] + acetyl-CoA = N-terminal N(alpha)-acetyl-L-valyl-[protein] + CoA + H(+). It catalyses the reaction N-terminal L-cysteinyl-[protein] + acetyl-CoA = N-terminal N(alpha)-acetyl-L-cysteinyl-[protein] + CoA + H(+). The catalysed reaction is N-terminal L-threonyl-[protein] + acetyl-CoA = N-terminal N(alpha)-acetyl-L-threonyl-[protein] + CoA + H(+). In terms of biological role, N-alpha-acetyltransferase that specifically mediates the acetylation of N-terminal residues. Able to mediate acetylation of a wide variety of N-terminal residues, with preference for hydrophobic N-termini. Acetylates GroS/GroES and GroEL1. Able to acetylate the ribosomal protein bS18, but it is unclear whether it acetylates its N-terminal alanine residue. In Mycobacterium tuberculosis (strain ATCC 25618 / H37Rv), this protein is N-alpha-acetyltransferase RimI.